The chain runs to 287 residues: 4-hydroxybenzoate octaprenyltransferase (287 aa).

The next 5 membrane-spanning stretches (helical) occupy residues 20 to 38, 95 to 115, 211 to 231, 235 to 255, and 266 to 286; these read IGTL…FAAG, IVFL…NPLV, IIAA…LIAE, IYGG…KLIF, and FLNN…DYLV.

The protein belongs to the UbiA prenyltransferase family. Requires Mg(2+) as cofactor.

It localises to the cell inner membrane. It catalyses the reaction all-trans-octaprenyl diphosphate + 4-hydroxybenzoate = 4-hydroxy-3-(all-trans-octaprenyl)benzoate + diphosphate. The protein operates within cofactor biosynthesis; ubiquinone biosynthesis. Functionally, catalyzes the prenylation of para-hydroxybenzoate (PHB) with an all-trans polyprenyl group. Mediates the second step in the final reaction sequence of ubiquinone-8 (UQ-8) biosynthesis, which is the condensation of the polyisoprenoid side chain with PHB, generating the first membrane-bound Q intermediate 3-octaprenyl-4-hydroxybenzoate. In Shewanella piezotolerans (strain WP3 / JCM 13877), this protein is 4-hydroxybenzoate octaprenyltransferase.